A 153-amino-acid polypeptide reads, in one-letter code: D-aminoacyl-tRNA deacylase (153 aa).

The Gly-cisPro motif, important for rejection of L-amino acids motif lies at 137 to 138; that stretch reads GP.

Belongs to the DTD family. Homodimer.

The protein localises to the cytoplasm. It carries out the reaction glycyl-tRNA(Ala) + H2O = tRNA(Ala) + glycine + H(+). The enzyme catalyses a D-aminoacyl-tRNA + H2O = a tRNA + a D-alpha-amino acid + H(+). Its function is as follows. An aminoacyl-tRNA editing enzyme that deacylates mischarged D-aminoacyl-tRNAs. Also deacylates mischarged glycyl-tRNA(Ala), protecting cells against glycine mischarging by AlaRS. Acts via tRNA-based rather than protein-based catalysis; rejects L-amino acids rather than detecting D-amino acids in the active site. By recycling D-aminoacyl-tRNA to D-amino acids and free tRNA molecules, this enzyme counteracts the toxicity associated with the formation of D-aminoacyl-tRNA entities in vivo and helps enforce protein L-homochirality. This chain is D-aminoacyl-tRNA deacylase, found in Herpetosiphon aurantiacus (strain ATCC 23779 / DSM 785 / 114-95).